Reading from the N-terminus, the 241-residue chain is CD99 antigen-like protein 2 (241 aa).

Residues 1 to 23 (MAKWGSPFVFALACLALSWRVYG) form the signal peptide. Topologically, residues 24-173 (DDFDLYDALG…TGFGSQAETG (150 aa)) are extracellular. The segment at 30 to 168 (DALGDPTEKP…NDGSDTGFGS (139 aa)) is disordered. Residues 143–154 (GGGGGGGGGRAT) are compositionally biased toward gly residues. A helical transmembrane segment spans residues 174-196 (TIAGIASALAMALIGAVSSYISY). At 197 to 241 (QQKKFCFSIQEGLNAEYVKGEHMEAVVSEEPQVKYSVVESQSAIP) the chain is on the cytoplasmic side.

It belongs to the CD99 family.

It is found in the cell membrane. Its subcellular location is the cell junction. In terms of biological role, may function as a homophilic adhesion molecule. This chain is CD99 antigen-like protein 2 (cd99l2), found in Xenopus tropicalis (Western clawed frog).